The primary structure comprises 117 residues: Large ribosomal subunit protein uL18 (117 aa).

The protein belongs to the universal ribosomal protein uL18 family. As to quaternary structure, part of the 50S ribosomal subunit; part of the 5S rRNA/L5/L18/L25 subcomplex. Contacts the 5S and 23S rRNAs.

In terms of biological role, this is one of the proteins that bind and probably mediate the attachment of the 5S RNA into the large ribosomal subunit, where it forms part of the central protuberance. In Tolumonas auensis (strain DSM 9187 / NBRC 110442 / TA 4), this protein is Large ribosomal subunit protein uL18.